Reading from the N-terminus, the 103-residue chain is Preprofallaxidin-6 (103 aa).

The signal sequence occupies residues 1–22 (MASLKKSLFLVLFLGFVSLSIC). A propeptide spanning residues 23–49 (EEEKRENEGNENEEEDENHEEGSEEKR) is cleaved from the precursor. The interval 24–50 (EEKRENEGNENEEEDENHEEGSEEKRG) is disordered. The segment covering 31–41 (GNENEEEDENH) has biased composition (acidic residues). L65 is modified (leucine amide). Positions 67 to 103 (KRSEEKRYHPFGKRSEEKRYHPFGKRSEEKRYPPIGK) are disordered. The propeptide occupies 69 to 73 (SEEKR). Phenylalanine amide is present on F77. A propeptide spanning residues 81 to 85 (SEEKR) is cleaved from the precursor. F89 carries the post-translational modification Phenylalanine amide. Positions 93-97 (SEEKR) are excised as a propeptide. At I101 the chain carries Isoleucine amide.

The protein belongs to the frog skin active peptide (FSAP) family. Brevinin subfamily. Expressed by the skin glands.

The protein resides in the secreted. Its function is as follows. Fallaxidin-1.3 shows no antibacterial activity against Gram-positive or Gram-negative bacteria. Does not inhibit the formation of NO by neuronal nitric oxide synthase. Has no effect on splenocyte proliferation or smooth muscle contraction. Fallaxidin-1.4 shows no antibacterial activity against Gram-positive or Gram-negative bacteria. Does not inhibit the formation of NO by neuronal nitric oxide synthase. Has no effect on splenocyte proliferation or smooth muscle contraction. Functionally, fallaxidin-3.1 shows antibacterial activity against the Gram-positive bacteria E.faecalis (MIC=100 uM) and L.lactis (MIC=100 uM). No antibacterial activity against the Gram-positive bacteria B.cereus, L.innocua, M.luteus, S.epidermidis, S.uberis and S.aureus, or the Gram-negative bacteria E.cloacae and E.coli. The chain is Preprofallaxidin-6 from Litoria fallax (Eastern dwarf tree frog).